Consider the following 425-residue polypeptide: Protein cab-1 (425 aa).

A compositionally biased stretch (basic and acidic residues) spans 1-11 (MRYTFSDEKKA). Disordered regions lie at residues 1–20 (MRYTFSDEKKATTTTTSRAK) and 214–251 (LKKTQEKLSEQTPSAKANVESLESAMQTATGEPQVPQK). Residues 205-424 (ENEIAKESEL…EVCNPNFAAQ (220 aa)) form an AEX-3-binding region. The chain crosses the membrane as a helical span at residues 300 to 320 (LLLLAVGTVMCVGLIGTVAGG). The disordered stretch occupies residues 334 to 355 (DDGEYAPYAGTGPGFRKNKGNK).

Belongs to the NPDC1/cab-1 family. In terms of assembly, binds to the RAB3 GDP/GTP exchange factor aex-3. Expressed in a variety of neurons.

Its subcellular location is the membrane. The chain is Protein cab-1 (cab-1) from Caenorhabditis elegans.